Here is an 84-residue protein sequence, read N- to C-terminus: Large ribosomal subunit protein bL27 (84 aa).

Residues 1 to 29 are disordered; that stretch reads MAHKKGGGSTKNGRDSNPKYLGIKASGGS.

It belongs to the bacterial ribosomal protein bL27 family.

This chain is Large ribosomal subunit protein bL27, found in Chlorobium phaeobacteroides (strain BS1).